Here is a 476-residue protein sequence, read N- to C-terminus: Amino acid permease 3 (476 aa).

At 1–33 (MVQNHQTVLAVDMPQTGGSKYLDDDGKNKRTGS) the chain is on the cytoplasmic side. A helical transmembrane segment spans residues 34–54 (VWTASAHIITAVIGSGVLSLA). Residues 55–57 (WAT) lie on the Extracellular side of the membrane. The helical transmembrane segment at 58–78 (AQLGWLAGPVVMLLFSAVTYF) threads the bilayer. Residues 79 to 122 (TSSLLAACYRSGDPISGKRNYTYMDAVRSNLGGVKVTLCGIVQY) lie on the Cytoplasmic side of the membrane. A helical transmembrane segment spans residues 123-143 (LNIFGVAIGYTIASAISMMAI). Topologically, residues 144 to 166 (KRSNCFHKSGGKDPCHMNSNPYM) are extracellular. 2 consecutive transmembrane segments (helical) span residues 167–187 (IAFGLVQILFSQIPDFDQLWW) and 188–208 (LSILAAVMSFTYSSAGLALGI). The Extracellular portion of the chain corresponds to 209–277 (AQVVVNGKVK…EEKTMKKATL (69 aa)). A helical membrane pass occupies residues 278–298 (VSVSVTTMFYMLCGCMGYAAF). The Cytoplasmic portion of the chain corresponds to 299-300 (GD). A helical transmembrane segment spans residues 301-321 (LSPGNLLTGFGFYNPYWLLDI). Over 322–324 (ANA) the chain is Extracellular. The chain crosses the membrane as a helical span at residues 325–345 (AIVIHLIGAYQVYCQPLFAFI). The Cytoplasmic segment spans residues 346–384 (EKQASIQFPDSEFIAKDIKIPIPGFKPLRLNVFRLIWRT). 2 helical membrane-spanning segments follow: residues 385–405 (VFVIITTVISMLLPFFNDVVG) and 406–426 (LLGALGFWPLTVYFPVEMYIA). Topologically, residues 427 to 441 (QKKIPRWSTRWVCLQ) are cytoplasmic. Residues 442 to 462 (VFSLGCLVVSIAAAAGSIAGV) traverse the membrane as a helical segment. The Extracellular segment spans residues 463–476 (LLDLKSYKPFRSEY).

It belongs to the amino acid/polyamine transporter 2 family. Amino acid/auxin permease (AAAP) (TC 2.A.18.2) subfamily. As to expression, expressed in the root phloem. Detected in stamens, in cotyledons, and in major veins of mature leaves.

Its subcellular location is the cell membrane. The protein localises to the nucleus membrane. The protein resides in the endomembrane system. With respect to regulation, inhibited by carbonylcyanide m-chlorophenylhydrazone and 2,4-dinitrophenol. Its function is as follows. Amino acid-proton symporter. Stereospecific transporter with a broad specificity for GABA, tryptophan and both neutral and basic amino acids. High affinity transport of cationic amino acids. The protein is Amino acid permease 3 (AAP3) of Arabidopsis thaliana (Mouse-ear cress).